Consider the following 4763-residue polypeptide: Nonribosomal peptide synthetase sidC (4763 aa).

The interval methionine 1–serine 24 is disordered. Positions proline 15–serine 24 are enriched in polar residues. An adenylation 1 region spans residues serine 296–isoleucine 815. The Carrier 1 domain occupies glutamate 853–lysine 930. An O-(pantetheine 4'-phosphoryl)serine modification is found at serine 890. Residues threonine 1003–proline 1396 are condensation 1. The interval glycine 1398–alanine 1951 is adenylation 2. Positions leucine 1979–serine 2055 constitute a Carrier 2 domain. Serine 2016 carries the post-translational modification O-(pantetheine 4'-phosphoryl)serine. The segment at threonine 2092 to methionine 2423 is condensation 2. The segment at glutamate 2556 to leucine 3070 is adenylation 3. Residues arginine 3099–threonine 3175 form the Carrier 3 domain. The residue at position 3136 (serine 3136) is an O-(pantetheine 4'-phosphoryl)serine. Positions proline 3217–leucine 3626 are condensation 3. The Carrier 4 domain occupies serine 3647 to serine 3720. Serine 3681 is modified (O-(pantetheine 4'-phosphoryl)serine). The interval threonine 3761 to glutamine 4093 is condensation 4. Positions proline 4204–valine 4277 constitute a Carrier 5 domain. Serine 4238 is modified (O-(pantetheine 4'-phosphoryl)serine). A condensation 5 region spans residues glutamate 4344–phenylalanine 4593.

This sequence belongs to the NRP synthetase family.

Its pathway is siderophore biosynthesis. Its function is as follows. Nonribosomal peptide synthase; part of the siderophore biosynthetic pathway. Aspergillus fumigatus produces four types of siderophores, low-molecular-mass iron chelators, including excreted fusarinine C (FsC) and triacetylfusarinine C (TAFC) for iron uptake; and intacellular ferricrocin (FC) for hyphal and hydroxyferricrocin (HFC) for conidial iron distribution and storage. TAFC consists of three N(2)-acetyl-N(5)-anhydromevalonyl-N(5)-hydroxyornithine residues cyclically linked by ester bonds; FC is a cyclic hexapeptide with the structure Gly-Ser-Gly-(N(5)-acetyl-N(5)-hydroxyornithine)x3. The biosynthesis of all four siderophores depends on the hydroxylation of ornithine, catalyzed by the monooxygenase sidA. Subsequently, the pathways for biosynthesis of extra- and intracellular siderophores split. For biosynthesis of extracellular siderophores, the transacylase sidF transfers anhydromevalonyl to N(5)-hydroxyornithine. The required anhydromevalonyl-CoA moiety is derived from mevalonate by CoA ligation and dehydration catalyzed by sidI and sidH respectively. The acetylation of N(5)-hydroxyornithine for FC biosynthesis involves the constitutively expressed sidL. FC is hydroxylated to HFC by an as yet uncharacterized enzyme during conidiation. Assembly of fusarinine C (FsC) and FC is catalyzed by two different nonribosomal peptide synthetases (NRPS), sidD and sidC respectively. Subsequently, sidG catalyzes N2-acetylation of FsC for forming TAFC. Both extra- and intracellular siderophores are crucial for growth during iron limitation and virulence. The polypeptide is Nonribosomal peptide synthetase sidC (Aspergillus fumigatus (strain ATCC MYA-4609 / CBS 101355 / FGSC A1100 / Af293) (Neosartorya fumigata)).